A 343-amino-acid polypeptide reads, in one-letter code: tRNA N6-adenosine threonylcarbamoyltransferase (343 aa).

The Fe cation site is built by histidine 111 and histidine 115. Residues 134-138, aspartate 167, glycine 180, and asparagine 276 contribute to the substrate site; that span reads LVSGG. Residue aspartate 304 participates in Fe cation binding.

This sequence belongs to the KAE1 / TsaD family. Fe(2+) serves as cofactor.

The protein localises to the cytoplasm. The enzyme catalyses L-threonylcarbamoyladenylate + adenosine(37) in tRNA = N(6)-L-threonylcarbamoyladenosine(37) in tRNA + AMP + H(+). Its function is as follows. Required for the formation of a threonylcarbamoyl group on adenosine at position 37 (t(6)A37) in tRNAs that read codons beginning with adenine. Is involved in the transfer of the threonylcarbamoyl moiety of threonylcarbamoyl-AMP (TC-AMP) to the N6 group of A37, together with TsaE and TsaB. TsaD likely plays a direct catalytic role in this reaction. This Hahella chejuensis (strain KCTC 2396) protein is tRNA N6-adenosine threonylcarbamoyltransferase.